A 435-amino-acid polypeptide reads, in one-letter code: ATP-dependent protease ATPase subunit HslU (435 aa).

Residues isoleucine 18, 60 to 65 (GVGKTE), aspartate 248, glutamate 313, and arginine 385 each bind ATP.

This sequence belongs to the ClpX chaperone family. HslU subfamily. A double ring-shaped homohexamer of HslV is capped on each side by a ring-shaped HslU homohexamer. The assembly of the HslU/HslV complex is dependent on binding of ATP.

It is found in the cytoplasm. ATPase subunit of a proteasome-like degradation complex; this subunit has chaperone activity. The binding of ATP and its subsequent hydrolysis by HslU are essential for unfolding of protein substrates subsequently hydrolyzed by HslV. HslU recognizes the N-terminal part of its protein substrates and unfolds these before they are guided to HslV for hydrolysis. The protein is ATP-dependent protease ATPase subunit HslU of Rhizobium meliloti (strain 1021) (Ensifer meliloti).